The primary structure comprises 758 residues: Calpain (758 aa).

The 299-residue stretch at L99–G397 folds into the Calpain catalytic domain. Catalysis depends on residues C154, H313, and N337. The domain III stretch occupies residues L398–E562. The linker stretch occupies residues D563–T582. A domain IV region spans residues L583–Y757. Ca(2+)-binding residues include D641, N643, T645, H647, E652, D671, D673, S675, Y677, and E682. 2 EF-hand domains span residues I658 to H693 and V694 to A729.

It belongs to the peptidase C2 family.

Activated by free cytoplasmic calcium. Calpains are calcium-activated non-lysosomal thiol-proteases. The protein is Calpain of Schistosoma mansoni (Blood fluke).